The primary structure comprises 437 residues: uncharacterized protein (437 aa).

Phosphoserine occurs at positions 290 and 293. At T296 the chain carries Phosphothreonine. S418 and S428 each carry phosphoserine.

This is an uncharacterized protein from Schizosaccharomyces pombe (strain 972 / ATCC 24843) (Fission yeast).